We begin with the raw amino-acid sequence, 436 residues long: 3-ketoacyl-CoA thiolase (436 aa).

The Acyl-thioester intermediate role is filled by Cys-99. Residues His-392 and Cys-422 each act as proton acceptor in the active site.

The protein belongs to the thiolase-like superfamily. Thiolase family. As to quaternary structure, heterotetramer of two alpha chains (FadJ) and two beta chains (FadI).

Its subcellular location is the cytoplasm. The enzyme catalyses an acyl-CoA + acetyl-CoA = a 3-oxoacyl-CoA + CoA. It participates in lipid metabolism; fatty acid beta-oxidation. Functionally, catalyzes the final step of fatty acid oxidation in which acetyl-CoA is released and the CoA ester of a fatty acid two carbons shorter is formed. The chain is 3-ketoacyl-CoA thiolase from Citrobacter koseri (strain ATCC BAA-895 / CDC 4225-83 / SGSC4696).